The following is a 509-amino-acid chain: 2-isopropylmalate synthase (509 aa).

The region spanning 5–267 (IQIFDTTLRD…QTALNLEETK (263 aa)) is the Pyruvate carboxyltransferase domain. The Mn(2+) site is built by D14, H202, H204, and N238. Residues 391–509 (KLETLQLQYV…AAENVEKVGN (119 aa)) are regulatory domain.

This sequence belongs to the alpha-IPM synthase/homocitrate synthase family. LeuA type 1 subfamily. Homodimer. Mn(2+) serves as cofactor.

Its subcellular location is the cytoplasm. The enzyme catalyses 3-methyl-2-oxobutanoate + acetyl-CoA + H2O = (2S)-2-isopropylmalate + CoA + H(+). It participates in amino-acid biosynthesis; L-leucine biosynthesis; L-leucine from 3-methyl-2-oxobutanoate: step 1/4. Functionally, catalyzes the condensation of the acetyl group of acetyl-CoA with 3-methyl-2-oxobutanoate (2-ketoisovalerate) to form 3-carboxy-3-hydroxy-4-methylpentanoate (2-isopropylmalate). The chain is 2-isopropylmalate synthase from Staphylococcus aureus (strain USA300).